Here is a 209-residue protein sequence, read N- to C-terminus: Na(+)-translocating NADH-quinone reductase subunit D (209 aa).

A run of 5 helical transmembrane segments spans residues 42–62 (LVMT…ISLI), 70–90 (VRII…DQIL), 103–123 (VFVG…AYAM), 131–151 (FMDG…VGFV), and 178–198 (NGLF…IWGL).

The protein belongs to the NqrDE/RnfAE family. As to quaternary structure, composed of six subunits; NqrA, NqrB, NqrC, NqrD, NqrE and NqrF.

The protein resides in the cell inner membrane. It carries out the reaction a ubiquinone + n Na(+)(in) + NADH + H(+) = a ubiquinol + n Na(+)(out) + NAD(+). NQR complex catalyzes the reduction of ubiquinone-1 to ubiquinol by two successive reactions, coupled with the transport of Na(+) ions from the cytoplasm to the periplasm. NqrA to NqrE are probably involved in the second step, the conversion of ubisemiquinone to ubiquinol. This chain is Na(+)-translocating NADH-quinone reductase subunit D, found in Yersinia enterocolitica serotype O:8 / biotype 1B (strain NCTC 13174 / 8081).